A 196-amino-acid chain; its full sequence is Imidazoleglycerol-phosphate dehydratase (196 aa).

The protein belongs to the imidazoleglycerol-phosphate dehydratase family.

The protein localises to the cytoplasm. It catalyses the reaction D-erythro-1-(imidazol-4-yl)glycerol 3-phosphate = 3-(imidazol-4-yl)-2-oxopropyl phosphate + H2O. The protein operates within amino-acid biosynthesis; L-histidine biosynthesis; L-histidine from 5-phospho-alpha-D-ribose 1-diphosphate: step 6/9. The protein is Imidazoleglycerol-phosphate dehydratase of Clostridium botulinum (strain Okra / Type B1).